A 143-amino-acid chain; its full sequence is Ribonuclease H (143 aa).

One can recognise an RNase H type-1 domain in the interval Met-1 to Glu-140. Mg(2+)-binding residues include Asp-8, Glu-46, Asp-68, and Asp-132.

The protein belongs to the RNase H family. As to quaternary structure, monomer. It depends on Mg(2+) as a cofactor.

The protein resides in the cytoplasm. The enzyme catalyses Endonucleolytic cleavage to 5'-phosphomonoester.. Functionally, endonuclease that specifically degrades the RNA of RNA-DNA hybrids. The protein is Ribonuclease H of Legionella pneumophila (strain Lens).